Reading from the N-terminus, the 485-residue chain is Glutamyl-tRNA(Gln) amidotransferase subunit A (485 aa).

Active-site charge relay system residues include K82 and S157. S181 functions as the Acyl-ester intermediate in the catalytic mechanism.

It belongs to the amidase family. GatA subfamily. As to quaternary structure, heterotrimer of A, B and C subunits.

The catalysed reaction is L-glutamyl-tRNA(Gln) + L-glutamine + ATP + H2O = L-glutaminyl-tRNA(Gln) + L-glutamate + ADP + phosphate + H(+). Functionally, allows the formation of correctly charged Gln-tRNA(Gln) through the transamidation of misacylated Glu-tRNA(Gln) in organisms which lack glutaminyl-tRNA synthetase. The reaction takes place in the presence of glutamine and ATP through an activated gamma-phospho-Glu-tRNA(Gln). This Treponema denticola (strain ATCC 35405 / DSM 14222 / CIP 103919 / JCM 8153 / KCTC 15104) protein is Glutamyl-tRNA(Gln) amidotransferase subunit A.